Here is a 378-residue protein sequence, read N- to C-terminus: GTP 3',8-cyclase 3 (378 aa).

Residues 40-259 (RCGRTMGDLR…STLGKKYGPI (220 aa)) enclose the Radical SAM core domain. Arginine 49 contributes to the GTP binding site. 2 residues coordinate [4Fe-4S] cluster: cysteine 56 and cysteine 60. Residue tyrosine 62 participates in S-adenosyl-L-methionine binding. Cysteine 63 serves as a coordination point for [4Fe-4S] cluster. Arginine 99 is a GTP binding site. Position 103 (glycine 103) interacts with S-adenosyl-L-methionine. A GTP-binding site is contributed by threonine 134. Serine 158 contributes to the S-adenosyl-L-methionine binding site. Lysine 195 contributes to the GTP binding site. Methionine 229 is a binding site for S-adenosyl-L-methionine. [4Fe-4S] cluster-binding residues include cysteine 292 and cysteine 295. 297–299 (RSR) is a binding site for GTP. Cysteine 309 serves as a coordination point for [4Fe-4S] cluster.

Belongs to the radical SAM superfamily. MoaA family. Monomer and homodimer. The cofactor is [4Fe-4S] cluster.

The catalysed reaction is GTP + AH2 + S-adenosyl-L-methionine = (8S)-3',8-cyclo-7,8-dihydroguanosine 5'-triphosphate + 5'-deoxyadenosine + L-methionine + A + H(+). It functions in the pathway cofactor biosynthesis; molybdopterin biosynthesis. Catalyzes the cyclization of GTP to (8S)-3',8-cyclo-7,8-dihydroguanosine 5'-triphosphate. The chain is GTP 3',8-cyclase 3 from Mycobacterium bovis (strain ATCC BAA-935 / AF2122/97).